Here is a 397-residue protein sequence, read N- to C-terminus: ATP-dependent RNA helicase RhlB (397 aa).

Positions 8 to 36 (TRFHDFNLAPELMHAIQDLGFPYCTPIQA) match the Q motif motif. The Helicase ATP-binding domain occupies 39–219 (LGFTLKGKDA…KQWTTDPSIV (181 aa)). Position 52–59 (52–59 (AQTGTGKT)) interacts with ATP. A DEAD box motif is present at residues 165–168 (DEAD). The 151-residue stretch at 242-392 (DKYKLLYNLV…TPPTHLLRAV (151 aa)) folds into the Helicase C-terminal domain.

This sequence belongs to the DEAD box helicase family. RhlB subfamily. Component of the RNA degradosome, which is a multiprotein complex involved in RNA processing and mRNA degradation.

The protein resides in the cytoplasm. It carries out the reaction ATP + H2O = ADP + phosphate + H(+). Its function is as follows. DEAD-box RNA helicase involved in RNA degradation. Has RNA-dependent ATPase activity and unwinds double-stranded RNA. The chain is ATP-dependent RNA helicase RhlB from Pseudomonas syringae pv. tomato (strain ATCC BAA-871 / DC3000).